A 563-amino-acid polypeptide reads, in one-letter code: Probable trehalase (563 aa).

Substrate contacts are provided by residues arginine 154, 161 to 162 (WD), asparagine 198, 207 to 209 (RSQ), 274 to 276 (RPE), and glycine 307. Active-site proton donor/acceptor residues include aspartate 309 and glutamate 517. Glutamate 532 provides a ligand contact to substrate.

The protein belongs to the glycosyl hydrolase 37 family.

It carries out the reaction alpha,alpha-trehalose + H2O = alpha-D-glucose + beta-D-glucose. In terms of biological role, involved in the regulation of trehalose content by hydrolyzing trehalose to glucose. This chain is Probable trehalase, found in Oryza sativa subsp. japonica (Rice).